Consider the following 321-residue polypeptide: MATH domain and coiled-coil domain-containing protein At3g58410 (321 aa).

One can recognise an MATH domain in the interval 6–128 (GKKFAWVIKN…NGELMIVAEV (123 aa)). Positions 255 to 310 (KVDWLEKKLDQVRDKKEKERSCLAKLQETEETLLKLKQKCTELDALMDTEKAELSA) form a coiled coil.

This is MATH domain and coiled-coil domain-containing protein At3g58410 from Arabidopsis thaliana (Mouse-ear cress).